The chain runs to 86 residues: Cell division topological specificity factor (86 aa).

This sequence belongs to the MinE family.

Its function is as follows. Prevents the cell division inhibition by proteins MinC and MinD at internal division sites while permitting inhibition at polar sites. This ensures cell division at the proper site by restricting the formation of a division septum at the midpoint of the long axis of the cell. This chain is Cell division topological specificity factor, found in Aliivibrio salmonicida (strain LFI1238) (Vibrio salmonicida (strain LFI1238)).